A 409-amino-acid chain; its full sequence is Imidazolonepropionase (409 aa).

The Fe(3+) site is built by His78 and His80. Zn(2+) is bound by residues His78 and His80. Residues Arg87, Tyr150, and His183 each contribute to the 4-imidazolone-5-propanoate site. Position 150 (Tyr150) interacts with N-formimidoyl-L-glutamate. His248 lines the Fe(3+) pocket. His248 contributes to the Zn(2+) binding site. Gln251 contacts 4-imidazolone-5-propanoate. Asp323 lines the Fe(3+) pocket. Asp323 is a Zn(2+) binding site. Positions 325 and 327 each coordinate N-formimidoyl-L-glutamate. Thr328 contributes to the 4-imidazolone-5-propanoate binding site.

The protein belongs to the metallo-dependent hydrolases superfamily. HutI family. Zn(2+) is required as a cofactor. Fe(3+) serves as cofactor.

It localises to the cytoplasm. The catalysed reaction is 4-imidazolone-5-propanoate + H2O = N-formimidoyl-L-glutamate. It participates in amino-acid degradation; L-histidine degradation into L-glutamate; N-formimidoyl-L-glutamate from L-histidine: step 3/3. Its function is as follows. Catalyzes the hydrolytic cleavage of the carbon-nitrogen bond in imidazolone-5-propanoate to yield N-formimidoyl-L-glutamate. It is the third step in the universal histidine degradation pathway. The protein is Imidazolonepropionase of Mesorhizobium japonicum (strain LMG 29417 / CECT 9101 / MAFF 303099) (Mesorhizobium loti (strain MAFF 303099)).